The chain runs to 215 residues: Putative B3 domain-containing protein Os11g0625400 (215 aa).

Positions 1–51 (MTVELEKIAGSFFISKGWKTFVHRTGLLSGQYIRFQVLTPSKINVLLFDKK) form a DNA-binding region, TF-B3 1. Residues 92-117 (SHTSNKETSSDSRTESMTDIPSSSDN) are disordered. Over residues 95–107 (SNKETSSDSRTES) the composition is skewed to basic and acidic residues. A compositionally biased stretch (polar residues) spans 108 to 117 (MTDIPSSSDN). The segment at residues 123–215 (DIKNYISIIG…PNVKITIDVL (93 aa)) is a DNA-binding region (TF-B3 2).

Its subcellular location is the nucleus. The polypeptide is Putative B3 domain-containing protein Os11g0625400 (Oryza sativa subsp. japonica (Rice)).